Consider the following 2211-residue polypeptide: Coagulation factor V (2211 aa).

An N-terminal signal peptide occupies residues 1–28 (MFLACPGFWVLVVLGSSWAGWGNLGAEA). Plastocyanin-like domains are found at residues 30–193 (KLRQ…LLIC), 203–327 (TQKM…IDIK), 348–525 (KRWE…LLIC), and 535–686 (IQRA…FRDA). 2 consecutive F5/8 type A domains span residues 30 to 327 (KLRQ…IDIK) and 348 to 686 (KRWE…FRDA). Positions 139 and 140 each coordinate Ca(2+). Cys167 and Cys193 are joined by a disulfide. Residues Asn225, Asn239, Asn297, Asn382, and Asn460 are each glycosylated (N-linked (GlcNAc...) asparagine). Cys248 and Cys329 are joined by a disulfide. Cys499 and Cys525 are disulfide-bonded. 2 N-linked (GlcNAc...) asparagine glycosylation sites follow: Asn553 and Asn587. Cys607 and Cys688 are joined by a disulfide. Thr644 is subject to Phosphothreonine. Residues 696-1564 (SYEIIYEPSG…PDNIAAWYLR (869 aa)) form a b region. Sulfotyrosine is present on residues Tyr697, Tyr701, and Tyr730. The propeptide at 742-1564 (SFRNSSLNQE…PDNIAAWYLR (823 aa)) is activation peptide (connecting region). Asn745, Asn756, Asn774, and Asn780 each carry an N-linked (GlcNAc...) asparagine glycan. The interval 814 to 844 (LEHAGLDKNSALNPPMAEHSSPYSEDPREDH) is disordered. N-linked (GlcNAc...) asparagine glycans are attached at residues Asn902, Asn952, and Asn964. The span at 954 to 969 (TVNKLPNSPQNDSRTW) shows a compositional bias: polar residues. Residues 954–1039 (TVNKLPNSPQ…PLSPRSFHPL (86 aa)) are disordered. The segment covering 995 to 1009 (PLQDRQDRRNSRLKE) has biased composition (basic and acidic residues). Residues Asn1044, Asn1053, Asn1062, Asn1071, Asn1078, and Asn1094 are each glycosylated (N-linked (GlcNAc...) asparagine). 2 disordered regions span residues 1084 to 1162 (SLPD…IPNY) and 1195 to 1471 (QPSI…FGQT). Polar residues-rich tracts occupy residues 1091–1103 (TSPN…TSSP) and 1127–1160 (THST…SQIP). 30 consecutive repeat copies span residues 1124 to 1137 (SDPT…SNRS), 1138 to 1151 (PDPT…SNRS), 1188 to 1196 (ATSLDLSQP), 1197 to 1205 (SISPDLGQM), 1206 to 1214 (ALSPDPGQE), 1215 to 1223 (SLSPDLGQT), 1224 to 1232 (SLSPDLSQE), 1233 to 1241 (SLSPDLGQT), 1242 to 1250 (ALSPDPSQE), 1251 to 1259 (SLSPDLGQT), 1260 to 1268 (ALSPDPSQE), 1269 to 1277 (SLSPDLGQT), 1278 to 1286 (ALSPDPGQE), 1287 to 1295 (SLSPDLGQT), 1296 to 1304 (SLSPDLSQE), 1305 to 1313 (SLSPDLGQT), 1314 to 1322 (ALSPDPSQE), 1323 to 1331 (SLSPDLGQT), 1332 to 1340 (ALSPDPSQE), 1341 to 1349 (SLSPDLGQT), 1350 to 1358 (SLSPDLGQE), 1359 to 1367 (SLSPDLGQT), 1368 to 1376 (ALSPDPSQE), 1377 to 1385 (SLSPDLGQT), 1386 to 1394 (SLSPDLGQE), 1395 to 1403 (SLSPDLGQT), 1404 to 1412 (ALSPDLSQE), 1413 to 1421 (SLSPDLGQT), 1422 to 1430 (PLSPDLSLE), and 1431 to 1439 (SLSPDLSQL). A 2 X 14 AA tandem repeats region spans residues 1124–1151 (SDPTHSTTAPSNRSPDPTHSTTAPSNRS). Residues 1188–1453 (ATSLDLSQPS…TSPPLDLNQT (266 aa)) form a 30 X 9 AA approximate tandem repeats of [AS]-L-S-P-D-[LP]-[GS]-Q-[TE] region. Polar residues-rich tracts occupy residues 1214 to 1234 (ESLS…QESL), 1241 to 1252 (TALSPDPSQESL), 1259 to 1270 (TALSPDPSQESL), 1286 to 1306 (ESLS…QESL), 1313 to 1324 (TALSPDPSQESL), 1331 to 1352 (TALS…TSLS), 1367 to 1388 (TALS…TSLS), and 1403 to 1414 (TALSPDLSQESL). The segment covering 1422–1441 (PLSPDLSLESLSPDLSQLDL) has biased composition (low complexity). The stretch at 1440–1444 (DLKQT) is one 2-29; truncated repeat. Residues 1442-1463 (KQTSPPLDLNQTSHTSESSQSL) are compositionally biased toward polar residues. Residues 1445-1453 (SPPLDLNQT) form a 2-30 repeat. N-linked (GlcNAc...) asparagine glycans are attached at residues Asn1451 and Asn1490. 4 positions are modified to sulfotyrosine: Tyr1513, Tyr1529, Tyr1537, and Tyr1541. Residues Asn1550 and Asn1690 are each glycosylated (N-linked (GlcNAc...) asparagine). 2 Plastocyanin-like domains span residues 1569–1738 (NRKY…LLIC) and 1748–1890 (NMPV…FLIV). An F5/8 type A 3 domain is found at 1569–1890 (NRKYYYIAAE…AGMQTPFLIV (322 aa)). Cys1712 and Cys1738 are oxidised to a cystine. Residues His1830 and His1832 each coordinate Cu cation. Asn1839 is a glycosylation site (N-linked (GlcNAc...) asparagine). Asp1872 contacts Cu cation. 2 cysteine pairs are disulfide-bonded: Cys1894-Cys2048 and Cys2053-Cys2208. F5/8 type C domains are found at residues 1894-2048 (CKMP…LQGC) and 2053-2208 (CSTP…LFGC). Asn1997 and Asn2196 each carry an N-linked (GlcNAc...) asparagine glycan.

Belongs to the multicopper oxidase family. As to quaternary structure, factor Va, the activated form of factor V, is composed of a heavy chain and a light chain, non-covalently bound. The interaction between the two chains is calcium-dependent. Forms heterodimer with SERPINA5. Thrombin activates factor V proteolytically to the active cofactor, factor Va (formation of a heavy chain at the N-terminus and a light chain at the C-terminus). Post-translationally, sulfation is required for efficient thrombin cleavage and activation and for full procoagulant activity. In terms of processing, activated protein C inactivates factor V and factor Va by proteolytic degradation.

The protein localises to the secreted. Its activity is regulated as follows. Inhibited by SERPINA5. In terms of biological role, central regulator of hemostasis. It serves as a critical cofactor for the prothrombinase activity of factor Xa that results in the activation of prothrombin to thrombin. The chain is Coagulation factor V (F5) from Bos taurus (Bovine).